Reading from the N-terminus, the 206-residue chain is Reticulon-like protein B13 (206 aa).

Residues 16–206 (VEDIYLWRRK…GTEEKVKKSE (191 aa)) form the Reticulon domain. Transmembrane regions (helical) follow at residues 27-47 (LAFSTLLVSTSTWILLSFYGF), 50-70 (ITIVSWIGIAVVSMIFLWGSL), and 134-154 (IGNLLDFHTCLFIGLVMGLTV).

Its subcellular location is the endoplasmic reticulum membrane. The polypeptide is Reticulon-like protein B13 (RTNLB13) (Arabidopsis thaliana (Mouse-ear cress)).